The chain runs to 447 residues: Clusterin (447 aa).

Positions 1–22 (MKTLLLCVGLLLSWERGQVLGD) are cleaved as a signal peptide. The short motif at 77-80 (KKNK) is the Nuclear localization signal element. N-linked (GlcNAc...) asparagine glycosylation is found at asparagine 85 and asparagine 102. Intrachain disulfides connect cysteine 101–cysteine 311, cysteine 112–cysteine 303, cysteine 115–cysteine 300, cysteine 120–cysteine 293, and cysteine 128–cysteine 283. Serine 132 is subject to Phosphoserine. 5 N-linked (GlcNAc...) asparagine glycosylation sites follow: asparagine 144, asparagine 289, asparagine 326, asparagine 352, and asparagine 372. Phosphoserine is present on serine 394. The Nuclear localization signal signature appears at 441–445 (RKKKR).

Belongs to the clusterin family. Antiparallel disulfide-linked heterodimer of an alpha chain and a beta chain. Self-associates and forms higher oligomers. Interacts with a broad range of misfolded proteins, including APP, APOC2 and LYZ. Slightly acidic pH promotes interaction with misfolded proteins. Forms high-molecular weight oligomers upon interaction with misfolded proteins. Interacts with APOA1, LRP2, CLUAP1 and PON1. Interacts with the complement membrane attack complex. Interacts (via alpha chain) with XRCC6. Interacts with SYVN1, COMMD1, BTRC, CUL1 and with ubiquitin and SCF (SKP1-CUL1-F-box protein) E3 ubiquitin-protein ligase complexes. Interacts (via alpha chain) with BAX in stressed cells, where BAX undergoes a conformation change leading to association with the mitochondrial membrane. Does not interact with BAX in unstressed cells. Found in a complex with LTF, CLU, EPPIN and SEMG1. Interacts (immaturely glycosylated pre-secreted form) with HSPA5; this interaction promotes CLU stability and facilitates stress-induced CLU retrotranslocation from the secretory pathway to the mitochondria, thereby reducing stress-induced apoptosis by stabilizing mitochondrial membrane integrity. Interacts with BCL2L1; this interaction releases and activates BAX and promotes cell death. Interacts with TGFBR2 and ACVR1. Interacts (secreted form) with STMN3; this interaction may act as an important modulator during neuronal differentiation. Interacts with VLDLR and LRP8. Proteolytically cleaved on its way through the secretory system, probably within the Golgi lumen. Proteolytic cleavage is not necessary for its chaperone activity. All non-secreted forms are not proteolytically cleaved. Chaperone activity of uncleaved forms is dependent on a non-reducing environment. Post-translationally, polyubiquitinated, leading to proteasomal degradation. Under cellular stress, the intracellular level of cleaved form is reduced due to proteasomal degradation. In terms of processing, heavily N-glycosylated. About 30% of the protein mass is comprised of complex N-linked carbohydrate. Endoplasmic reticulum (ER) stress induces changes in glycosylation status and increases level of hypoglycosylated forms. Core carbohydrates are essential for chaperone activity. Non-secreted forms are hypoglycosylated or unglycosylated.

The protein resides in the secreted. Its subcellular location is the nucleus. It localises to the cytoplasm. The protein localises to the mitochondrion membrane. It is found in the cytosol. The protein resides in the microsome. Its subcellular location is the endoplasmic reticulum. It localises to the mitochondrion. The protein localises to the perinuclear region. It is found in the cytoplasmic vesicle. The protein resides in the secretory vesicle. Its subcellular location is the chromaffin granule. Its function is as follows. Functions as extracellular chaperone that prevents aggregation of non native proteins. Prevents stress-induced aggregation of blood plasma proteins. Inhibits formation of amyloid fibrils by APP, APOC2, B2M, CALCA, CSN3, SNCA and aggregation-prone LYZ variants (in vitro). Does not require ATP. Maintains partially unfolded proteins in a state appropriate for subsequent refolding by other chaperones, such as HSPA8/HSC70. Does not refold proteins by itself. Binding to cell surface receptors triggers internalization of the chaperone-client complex and subsequent lysosomal or proteasomal degradation. When secreted, protects cells against apoptosis and against cytolysis by complement: inhibits assembly of the complement membrane attack complex (MAC) by preventing polymerization of C9 pore component of the MAC complex. Intracellular forms interact with ubiquitin and SCF (SKP1-CUL1-F-box protein) E3 ubiquitin-protein ligase complexes and promote the ubiquitination and subsequent proteasomal degradation of target proteins. Promotes proteasomal degradation of COMMD1 and IKBKB. Modulates NF-kappa-B transcriptional activity. Following stress, promotes apoptosis. Inhibits apoptosis when associated with the mitochondrial membrane by interference with BAX-dependent release of cytochrome c into the cytoplasm. Plays a role in the regulation of cell proliferation. An intracellular form suppresses stress-induced apoptosis by stabilizing mitochondrial membrane integrity through interaction with HSPA5. Secreted form does not affect caspase or BAX-mediated intrinsic apoptosis and TNF-induced NF-kappa-B-activity. Secreted form act as an important modulator during neuronal differentiation through interaction with STMN3. Plays a role in the clearance of immune complexes that arise during cell injury. In Oryctolagus cuniculus (Rabbit), this protein is Clusterin (CLU).